The sequence spans 449 residues: 23S rRNA (uracil(1939)-C(5))-methyltransferase RlmD (449 aa).

Positions 1-66 (MGRSRHHNKL…AKFDEAKVVE (66 aa)) constitute a TRAM domain. Residues C79, C85, C88, and C169 each coordinate [4Fe-4S] cluster. Residues Q280, F309, N314, E330, N357, and D379 each coordinate S-adenosyl-L-methionine. C405 serves as the catalytic Nucleophile.

It belongs to the class I-like SAM-binding methyltransferase superfamily. RNA M5U methyltransferase family. RlmD subfamily.

The catalysed reaction is uridine(1939) in 23S rRNA + S-adenosyl-L-methionine = 5-methyluridine(1939) in 23S rRNA + S-adenosyl-L-homocysteine + H(+). In terms of biological role, catalyzes the formation of 5-methyl-uridine at position 1939 (m5U1939) in 23S rRNA. The chain is 23S rRNA (uracil(1939)-C(5))-methyltransferase RlmD from Francisella tularensis subsp. tularensis (strain FSC 198).